Consider the following 565-residue polypeptide: MTERTLSGIGVTPLSGVGTVVWYRPDADLPEPPAPVDVDAEAELARFEDARAAAEDELEAERERTAERVGEEEAAVFDAHVQFLNDPQITDGVSDAIESGLPAEHAVQETFTEFVEQFENMGGRMGERADDLRDVRDRLVRVLSDGERVDLSSLPEGSVVVAERLTPSDTAQLDPERVAGFVTVTGGRTSHAAIFARSLALPAIVGVGEELQSVEDGTEVVVDGESGDLVVDPSDERKEAAAAAADVDIRHEAVETADGVDIEVAANIGTLADLGPAVDRGADGVGLFRTEFLFLDRESPPDEDEQYEAYVEALESFDGGRVVVRTLDIGGDKPVPYLDLPDEENPFLGERGIRRSLGPDADLFETQVRALLRAAASADGANLSVMLPLVSTVEELRAGRERFESVAADLDAEGVANELPEFGIMVETPAAAFMADQFAPHVDFFSIGTNDLAQYVMAAERGNERVSELGDYRQPAVLRAIDATVSAAEGEDCWVGMCGEMAGDPDLTELLVGLGLDELSMSAVTVPQVKAAVAETDTADARDLAERVLQADTKAEVAEILTLDQ.

The active-site Tele-phosphohistidine intermediate is H191. R289 and R325 together coordinate phosphoenolpyruvate. Mg(2+)-binding residues include E427 and D451. Phosphoenolpyruvate-binding positions include 450–451 (ND) and R461. Catalysis depends on C498, which acts as the Proton donor.

Belongs to the PEP-utilizing enzyme family. Homodimer. It depends on Mg(2+) as a cofactor.

The protein localises to the cytoplasm. It carries out the reaction L-histidyl-[protein] + phosphoenolpyruvate = N(pros)-phospho-L-histidyl-[protein] + pyruvate. Functionally, general (non sugar-specific) component of the phosphoenolpyruvate-dependent sugar phosphotransferase system (sugar PTS). This major carbohydrate active-transport system catalyzes the phosphorylation of incoming sugar substrates concomitantly with their translocation across the cell membrane. Enzyme I transfers the phosphoryl group from phosphoenolpyruvate (PEP) to the phosphoryl carrier protein (HPr). The sequence is that of Phosphoenolpyruvate-protein phosphotransferase (ptsI) from Haloferax volcanii (strain ATCC 29605 / DSM 3757 / JCM 8879 / NBRC 14742 / NCIMB 2012 / VKM B-1768 / DS2) (Halobacterium volcanii).